We begin with the raw amino-acid sequence, 168 residues long: Ribosome maturation factor RimP (168 aa).

This sequence belongs to the RimP family.

It localises to the cytoplasm. Required for maturation of 30S ribosomal subunits. The protein is Ribosome maturation factor RimP of Mycoplasma mobile (strain ATCC 43663 / 163K / NCTC 11711) (Mesomycoplasma mobile).